Reading from the N-terminus, the 610-residue chain is Elongation factor 4 (610 aa).

Residues Asn14–Lys196 form the tr-type G domain. GTP is bound by residues Asp26–Thr31 and Asn143–Asp146.

It belongs to the TRAFAC class translation factor GTPase superfamily. Classic translation factor GTPase family. LepA subfamily.

The protein resides in the cell inner membrane. The enzyme catalyses GTP + H2O = GDP + phosphate + H(+). Its function is as follows. Required for accurate and efficient protein synthesis under certain stress conditions. May act as a fidelity factor of the translation reaction, by catalyzing a one-codon backward translocation of tRNAs on improperly translocated ribosomes. Back-translocation proceeds from a post-translocation (POST) complex to a pre-translocation (PRE) complex, thus giving elongation factor G a second chance to translocate the tRNAs correctly. Binds to ribosomes in a GTP-dependent manner. In Legionella pneumophila (strain Paris), this protein is Elongation factor 4.